We begin with the raw amino-acid sequence, 491 residues long: MDHTDNELQGTNSSGSLGGLDVRRRIPIKLISKQANKAKPAPRTQRTINRMPAKAPPGDEEGFDYNEEERYDCKGGELFANQRRFPGHLFWDFQINILGEKDDTPVHFCDKCGLPIKIYGRMIPCKHVFCYDCAILHEKKGDKMCPGCSDPVQRIEQCTRGSLFMCSIVQGCKRTYLSQRDLQAHINHRHMRAGKPVTRASLENVHPPIAPPPTEIPERFIMPPDKHHMSHIPPKQHIMMPPPPLQHVPHEHYNQPHEDIRAPPAELSMAPPPPRSVSQETFRISTRKHSNLITVPIQDDSNSGAREPPPPAPAPAHHHPEYQGQPVVSHPHHIMPPQQHYAPPPPPPPPISHPMPHPPQAAGTPHLVYSQAPPPPMTSAPPPITPPPGHIIAQMPPYMNHPPPGPPPPQHGGPPVTAPPPHHYNPNSLPQFTEDQGTLSPPFTQPGGMSPGIWPAPRGPPPPPRLQGPPSQTPLPGPHHPDQTRYRPYYQ.

The segment at 1-61 (MDHTDNELQG…PAKAPPGDEE (61 aa)) is disordered. The segment at 109–149 (CDKCGLPIKIYGRMIPCKHVFCYDCAILHEKKGDKMCPGCS) adopts an RING-type zinc-finger fold. Positions 148–206 (CSDPVQRIEQCTRGSLFMCSIVQGCKRTYLSQRDLQAHINHRHMRAGKPVTRASLENVH) are HYB domain. A C2H2-type zinc finger spans residues 164–190 (FMCSIVQGCKRTYLSQRDLQAHINHRH). Phosphoserine occurs at positions 201, 285, and 290. Residues 255 to 491 (QPHEDIRAPP…DQTRYRPYYQ (237 aa)) form a disordered region. Pro residues-rich tracts occupy residues 342–359 (APPPPPPPPISHPMPHPP), 372–389 (APPPPMTSAPPPITPPPG), and 399–423 (MNHPPPGPPPPQHGGPPVTAPPPHH). Polar residues predominate over residues 427 to 442 (NSLPQFTEDQGTLSPP). Positions 457–478 (PRGPPPPPRLQGPPSQTPLPGP) are enriched in pro residues.

The protein belongs to the Hakai family. Homodimer. Interacts with tyrosine-phosphorylated SRC substrates. Component of the WMM complex, a N6-methyltransferase complex composed of a catalytic subcomplex, named MAC, and of an associated subcomplex, named MACOM. The MAC subcomplex is composed of METTL3 and METTL14. The MACOM subcomplex is composed of WTAP, ZC3H13, CBLL1/HAKAI, VIRMA, and, in some cases of RBM15 (RBM15 or RBM15B). Also a component of a MACOM-like complex, named WTAP complex, composed of WTAP, ZC3H13, CBLL1, VIRMA, RBM15, BCLAF1 and THRAP3. Post-translationally, phosphorylated on tyrosine residues.

The protein localises to the nucleus speckle. The protein resides in the nucleus. It is found in the nucleoplasm. It localises to the cytoplasm. The catalysed reaction is S-ubiquitinyl-[E2 ubiquitin-conjugating enzyme]-L-cysteine + [acceptor protein]-L-lysine = [E2 ubiquitin-conjugating enzyme]-L-cysteine + N(6)-ubiquitinyl-[acceptor protein]-L-lysine.. It participates in protein modification; protein ubiquitination. Its function is as follows. E3 ubiquitin-protein ligase that mediates ubiquitination of several tyrosine-phosphorylated Src substrates, including CDH1, CTTN and DOK1. Targets CDH1 for endocytosis and degradation. Associated component of the WMM complex, a complex that mediates N6-methyladenosine (m6A) methylation of RNAs, a modification that plays a role in the efficiency of mRNA splicing and RNA processing. Its function in the WMM complex is unknown. The chain is E3 ubiquitin-protein ligase Hakai from Homo sapiens (Human).